Reading from the N-terminus, the 73-residue chain is Putative antitoxin VapB16 (73 aa).

Belongs to the UPF0330 family.

Its function is as follows. Possibly the antitoxin component of a type II toxin-antitoxin (TA) system. Its cognate toxin is VapC16 (Potential). The chain is Putative antitoxin VapB16 (vapB16) from Archaeoglobus fulgidus (strain ATCC 49558 / DSM 4304 / JCM 9628 / NBRC 100126 / VC-16).